The primary structure comprises 359 residues: tRNA-specific 2-thiouridylase MnmA (359 aa).

ATP is bound by residues 9–16 and Met35; that span reads GLSGGVDS. Residues 95–97 form an interaction with target base in tRNA region; sequence NPD. Cys100 acts as the Nucleophile in catalysis. An intrachain disulfide couples Cys100 to Cys197. Gly124 serves as a coordination point for ATP. Residues 147–149 are interaction with tRNA; the sequence is KDQ. Cys197 (cysteine persulfide intermediate) is an active-site residue. The tract at residues 309 to 310 is interaction with tRNA; that stretch reads RY.

Belongs to the MnmA/TRMU family.

Its subcellular location is the cytoplasm. It carries out the reaction S-sulfanyl-L-cysteinyl-[protein] + uridine(34) in tRNA + AH2 + ATP = 2-thiouridine(34) in tRNA + L-cysteinyl-[protein] + A + AMP + diphosphate + H(+). Functionally, catalyzes the 2-thiolation of uridine at the wobble position (U34) of tRNA, leading to the formation of s(2)U34. The protein is tRNA-specific 2-thiouridylase MnmA of Cupriavidus metallidurans (strain ATCC 43123 / DSM 2839 / NBRC 102507 / CH34) (Ralstonia metallidurans).